The chain runs to 151 residues: Deoxyuridine 5'-triphosphate nucleotidohydrolase (151 aa).

Substrate-binding positions include 70 to 72, Asn83, 87 to 89, and Met97; these read RSG and LID.

The protein belongs to the dUTPase family. Mg(2+) serves as cofactor.

The catalysed reaction is dUTP + H2O = dUMP + diphosphate + H(+). The protein operates within pyrimidine metabolism; dUMP biosynthesis; dUMP from dCTP (dUTP route): step 2/2. In terms of biological role, this enzyme is involved in nucleotide metabolism: it produces dUMP, the immediate precursor of thymidine nucleotides and it decreases the intracellular concentration of dUTP so that uracil cannot be incorporated into DNA. In Pseudomonas aeruginosa (strain UCBPP-PA14), this protein is Deoxyuridine 5'-triphosphate nucleotidohydrolase.